A 604-amino-acid polypeptide reads, in one-letter code: Threonine--tRNA ligase (604 aa).

Residues 197 to 499 form a catalytic region; it reads DHRKLGRELG…LIEEYAGDFP (303 aa). C296, H347, and H476 together coordinate Zn(2+).

Belongs to the class-II aminoacyl-tRNA synthetase family. In terms of assembly, homodimer. It depends on Zn(2+) as a cofactor.

The protein resides in the cytoplasm. It carries out the reaction tRNA(Thr) + L-threonine + ATP = L-threonyl-tRNA(Thr) + AMP + diphosphate + H(+). Its function is as follows. Catalyzes the attachment of threonine to tRNA(Thr) in a two-step reaction: L-threonine is first activated by ATP to form Thr-AMP and then transferred to the acceptor end of tRNA(Thr). Also edits incorrectly charged L-seryl-tRNA(Thr). In Synechococcus elongatus (strain ATCC 33912 / PCC 7942 / FACHB-805) (Anacystis nidulans R2), this protein is Threonine--tRNA ligase.